Here is a 517-residue protein sequence, read N- to C-terminus: Gamma-1-syntrophin (517 aa).

In terms of domain architecture, PDZ spans 57–140 (TVTIRRQTVG…EVTLTVSFLK (84 aa)). Residues 283 to 390 (QIVYMGWCEA…WERAFQTATF (108 aa)) form the PH domain.

Belongs to the syntrophin family. As to quaternary structure, isoform 1, but not isoform 2, interacts with the dystrophin protein DMD and related proteins DTNA and DTNB. Interacts with DGKZ. As to expression, brain specific. In CNS, it is expressed in the perikaryon and proximal portion of the neuronal processes. Strong expression in the hippocampus, neuron-rich dendate granule cells, and pyramidal cell layers. Highly expressed in neurons of the cerebral cortex. Also expressed in the cerebellar cortex, deep cerebellar nuclei, thalamus, and basal ganglia. No expression in muscle cells.

Its subcellular location is the cytoplasm. It localises to the cytoskeleton. The protein localises to the nucleus. In terms of biological role, adapter protein that binds to and probably organizes the subcellular localization of a variety of proteins. May link various receptors to the actin cytoskeleton and the dystrophin glycoprotein complex. May participate in regulating the subcellular location of diacylglycerol kinase-zeta to ensure that diacylglycerol is rapidly inactivated following receptor activation. The protein is Gamma-1-syntrophin (SNTG1) of Homo sapiens (Human).